The sequence spans 250 residues: Leucyl/phenylalanyl-tRNA--protein transferase (250 aa).

This sequence belongs to the L/F-transferase family.

It is found in the cytoplasm. It catalyses the reaction N-terminal L-lysyl-[protein] + L-leucyl-tRNA(Leu) = N-terminal L-leucyl-L-lysyl-[protein] + tRNA(Leu) + H(+). The catalysed reaction is N-terminal L-arginyl-[protein] + L-leucyl-tRNA(Leu) = N-terminal L-leucyl-L-arginyl-[protein] + tRNA(Leu) + H(+). The enzyme catalyses L-phenylalanyl-tRNA(Phe) + an N-terminal L-alpha-aminoacyl-[protein] = an N-terminal L-phenylalanyl-L-alpha-aminoacyl-[protein] + tRNA(Phe). Functionally, functions in the N-end rule pathway of protein degradation where it conjugates Leu, Phe and, less efficiently, Met from aminoacyl-tRNAs to the N-termini of proteins containing an N-terminal arginine or lysine. The sequence is that of Leucyl/phenylalanyl-tRNA--protein transferase from Bordetella avium (strain 197N).